The chain runs to 249 residues: Tetraspanin-7 (249 aa).

Topologically, residues 1 to 16 (MASRRMETKPVITCLK) are cytoplasmic. The helical transmembrane segment at 17 to 40 (TLLIIYSFVFWITGVILLAVGVWG) threads the bilayer. Topologically, residues 41–56 (KLTLGTYISLIAENST) are extracellular. N-linked (GlcNAc...) asparagine glycosylation is present at N54. A helical membrane pass occupies residues 57-75 (NAPYVLIGTGTTIVVFGLF). Topologically, residues 76–86 (GCFATCRGSPW) are cytoplasmic. A helical transmembrane segment spans residues 87–112 (MLKLYAMFLSLVFLAELVAGISGFVF). Residues 113-213 (RHEIKDTFLR…LVTSFMETNM (101 aa)) lie on the Extracellular side of the membrane. Residues N155, N158, N177, and N188 are each glycosylated (N-linked (GlcNAc...) asparagine). Residues 214–234 (GIIAGVAFGIAFSQLIGMLLA) traverse the membrane as a helical segment. Residues 235–249 (CCLSRFITANQYEMV) lie on the Cytoplasmic side of the membrane.

Belongs to the tetraspanin (TM4SF) family.

It is found in the membrane. Functionally, may be involved in cell proliferation and cell motility. The sequence is that of Tetraspanin-7 (Tspan7) from Mus musculus (Mouse).